Here is a 735-residue protein sequence, read N- to C-terminus: Rho GTPase-activating protein SYDE1 (735 aa).

Disordered regions lie at residues 1–253 (MAEP…PYEV), 601–655 (PDTR…AGDW), and 669–706 (FLSG…FDAP). The segment covering 14–47 (RGREKLPRKKSDAKDRGRPAQRSEPKPPEPEPRV) has biased composition (basic and acidic residues). Residues 151–160 (PTKTSRTKSP) show a composition bias toward low complexity. 4 positions are modified to phosphoserine: Ser-224, Ser-231, Ser-235, and Ser-244. The 118-residue stretch at 249–366 (RPYEVGPSAR…FRGCQAQQLA (118 aa)) folds into the C2 domain. Positions 398 to 604 (LPLQLLVERE…YLLQSWPDTR (207 aa)) constitute a Rho-GAP domain. Basic and acidic residues predominate over residues 669–679 (FLSGPDYDHVT). 2 positions are modified to phosphoserine: Ser-681 and Ser-683.

Palmitoylated. Probably palmitoylated by ZDHHC3 and ZDHHC7.

In terms of biological role, GTPase activator for the Rho-type GTPases. As a GCM1 downstream effector, it is involved in placental development and positively regulates trophoblast cells migration. It regulates cytoskeletal remodeling by controlling the activity of Rho GTPases including RHOA, CDC42 and RAC1. The sequence is that of Rho GTPase-activating protein SYDE1 (Syde1) from Rattus norvegicus (Rat).